Reading from the N-terminus, the 188-residue chain is Elongation factor P (188 aa).

This sequence belongs to the elongation factor P family.

Its subcellular location is the cytoplasm. It participates in protein biosynthesis; polypeptide chain elongation. In terms of biological role, involved in peptide bond synthesis. Stimulates efficient translation and peptide-bond synthesis on native or reconstituted 70S ribosomes in vitro. Probably functions indirectly by altering the affinity of the ribosome for aminoacyl-tRNA, thus increasing their reactivity as acceptors for peptidyl transferase. The protein is Elongation factor P of Anaplasma phagocytophilum (strain HZ).